Consider the following 278-residue polypeptide: Putative peptidase Cgl1093 (278 aa).

Residues 1–32 (MSSASFTTKALSVLAALTAASAPLVAASPAHA) form the signal peptide. In terms of domain architecture, Peptidase S1 spans 33-236 (LANARNVTGS…HAEWIAYYTG (204 aa)). A disulfide bond links C59 and C75. Catalysis depends on charge relay system residues H74, D123, and S189.

This sequence belongs to the peptidase S1 family.

Its subcellular location is the secreted. This is Putative peptidase Cgl1093 from Corynebacterium glutamicum (strain ATCC 13032 / DSM 20300 / JCM 1318 / BCRC 11384 / CCUG 27702 / LMG 3730 / NBRC 12168 / NCIMB 10025 / NRRL B-2784 / 534).